We begin with the raw amino-acid sequence, 327 residues long: tRNA uridine(34) hydroxylase (327 aa).

The Rhodanese domain occupies 122–218 (QENRCLVLDV…YGLKMGTGKW (97 aa)). Cys178 functions as the Cysteine persulfide intermediate in the catalytic mechanism.

The protein belongs to the TrhO family.

The enzyme catalyses uridine(34) in tRNA + AH2 + O2 = 5-hydroxyuridine(34) in tRNA + A + H2O. Its function is as follows. Catalyzes oxygen-dependent 5-hydroxyuridine (ho5U) modification at position 34 in tRNAs. In Chlamydia trachomatis serovar L2 (strain ATCC VR-902B / DSM 19102 / 434/Bu), this protein is tRNA uridine(34) hydroxylase.